The chain runs to 160 residues: Putative pre-16S rRNA nuclease (160 aa).

It belongs to the YqgF nuclease family.

It is found in the cytoplasm. Could be a nuclease involved in processing of the 5'-end of pre-16S rRNA. This is Putative pre-16S rRNA nuclease from Gluconobacter oxydans (strain 621H) (Gluconobacter suboxydans).